The sequence spans 390 residues: Elongation factor Tu 1 (390 aa).

One can recognise a tr-type G domain in the interval 10-201; sequence KPHVNVGTIG…LDEYVAVPPR (192 aa). Positions 19–26 are G1; sequence GHVDHGKT. 19-26 contacts GTP; the sequence is GHVDHGKT. Mg(2+) is bound at residue threonine 26. The tract at residues 55-59 is G2; it reads GITIA. A G3 region spans residues 76–79; it reads DCPG. GTP-binding positions include 76–80 and 131–134; these read DCPGH and NKAD. Residues 131 to 134 are G4; that stretch reads NKAD. Residues 168 to 170 are G5; sequence SAL.

This sequence belongs to the TRAFAC class translation factor GTPase superfamily. Classic translation factor GTPase family. EF-Tu/EF-1A subfamily. As to quaternary structure, monomer.

It is found in the cytoplasm. It carries out the reaction GTP + H2O = GDP + phosphate + H(+). Its function is as follows. GTP hydrolase that promotes the GTP-dependent binding of aminoacyl-tRNA to the A-site of ribosomes during protein biosynthesis. The sequence is that of Elongation factor Tu 1 from Wolbachia pipientis wMel.